Here is a 97-residue protein sequence, read N- to C-terminus: Large ribosomal subunit protein bL27 (97 aa).

A propeptide spanning residues 1–12 (MLKMTLNNLQLF) is cleaved from the precursor. Residues 13-37 (AHKKGGGSTSNGRDSQAKRLGAKAA) are disordered.

This sequence belongs to the bacterial ribosomal protein bL27 family. The N-terminus is cleaved by ribosomal processing cysteine protease Prp.

This chain is Large ribosomal subunit protein bL27, found in Streptococcus pneumoniae serotype 2 (strain D39 / NCTC 7466).